The chain runs to 941 residues: Lysine-specific demethylase 7A (941 aa).

Residues proline 37 to leucine 88 form a PHD-type zinc finger. Positions arginine 97–proline 114 are linker. The 157-residue stretch at phenylalanine 230 to lysine 386 folds into the JmjC domain. Threonine 279 contributes to the substrate binding site. Fe cation is bound by residues histidine 282 and aspartate 284. Substrate is bound at residue lysine 299. Residue histidine 354 participates in Fe cation binding. Disordered regions lie at residues glutamine 597–glutamate 633, threonine 677–serine 700, and glutamine 819–alanine 921. Phosphoserine is present on serine 604. Composition is skewed to basic and acidic residues over residues methionine 618–glutamate 633 and glycine 685–serine 700. A compositionally biased stretch (polar residues) spans serine 834–leucine 876.

Belongs to the JHDM1 histone demethylase family. JHDM1D subfamily. It depends on Fe(2+) as a cofactor.

It is found in the nucleus. The catalysed reaction is N(6),N(6)-dimethyl-L-lysyl(9)-[histone H3] + 2 2-oxoglutarate + 2 O2 = L-lysyl(9)-[histone H3] + 2 formaldehyde + 2 succinate + 2 CO2. The enzyme catalyses N(6),N(6)-dimethyl-L-lysyl(27)-[histone H3] + 2 2-oxoglutarate + 2 O2 = L-lysyl(27)-[histone H3] + 2 formaldehyde + 2 succinate + 2 CO2. It catalyses the reaction N(6),N(6)-dimethyl-L-lysyl(36)-[histone H3] + 2-oxoglutarate + O2 = N(6)-methyl-L-lysyl(36)-[histone H3] + formaldehyde + succinate + CO2. It carries out the reaction N(6)-methyl-L-lysyl(20)-[histone H4] + 2-oxoglutarate + O2 = L-lysyl(20)-[histone H4] + formaldehyde + succinate + CO2. Histone demethylase required for brain development. Specifically demethylates dimethylated 'Lys-9', 'Lys-27' and 'Lys-36' (H3K9me2, H3K27me2, H3K36me2, respectively) of histone H3 and monomethylated histone H4 'Lys-20' residue (H4K20Me1), thereby playing a central role in histone code. Specifically binds trimethylated 'Lys-4' of histone H3 (H3K4me3), affecting histone demethylase specificity: in presence of H3K4me3, it has no demethylase activity toward H3K9me2, while it has high activity toward H3K27me2. Demethylates H3K9me2 in absence of H3K4me3. Has activity toward H4K20Me1 only when nucleosome is used as a substrate and when not histone octamer is used as substrate. This Homo sapiens (Human) protein is Lysine-specific demethylase 7A (KDM7A).